Reading from the N-terminus, the 640-residue chain is Probable potassium transport system protein Kup 2 (640 aa).

The tract at residues 1–20 (MTADIAATPAETPATNGHGD) is disordered. Helical transmembrane passes span 30 to 50 (LTLG…LYAL), 71 to 91 (VVSL…VVIL), 117 to 137 (ASII…DAVI), 155 to 175 (AAFD…LFAV), 183 to 203 (VAAF…IAAF), 224 to 244 (FMLH…LAVT), 265 to 285 (WLFV…ALVI), 294 to 314 (PFFL…ATVA), 363 to 383 (LLLV…ALAS), 385 to 405 (YGIS…VVIW), 410 to 430 (WSPI…LTFL), and 437 to 457 (VLEG…LMYT).

The protein belongs to the HAK/KUP transporter (TC 2.A.72) family.

It is found in the cell inner membrane. The enzyme catalyses K(+)(in) + H(+)(in) = K(+)(out) + H(+)(out). In terms of biological role, transport of potassium into the cell. Likely operates as a K(+):H(+) symporter. The chain is Probable potassium transport system protein Kup 2 from Bradyrhizobium sp. (strain ORS 278).